Here is a 239-residue protein sequence, read N- to C-terminus: TPR repeat-containing protein TP_0282 (239 aa).

A helical transmembrane segment spans residues 21-43; sequence LLVGVLVAILGGLGLSAGCLLVM. TPR repeat units follow at residues 112-145 and 149-182; these read AYAQACVADIFFARKEWEKAQQAYVRAAYGARRS and GVYYFNAASCADERGRFEEARELYQRSARVQDFP.

The protein resides in the cell membrane. This Treponema pallidum (strain Nichols) protein is TPR repeat-containing protein TP_0282.